The following is a 246-amino-acid chain: Octanoyltransferase (246 aa).

Residues 38–213 (AQQSDEFWVL…FLAKRLGLTP (176 aa)) enclose the BPL/LPL catalytic domain. Residues 77–84 (RGGQVTYH), 144–146 (SLG), and 157–159 (GLA) contribute to the substrate site. C175 acts as the Acyl-thioester intermediate in catalysis. Residues 225–246 (RQENVTTGGDPGSALTQQPERL) are disordered.

It belongs to the LipB family.

Its subcellular location is the cytoplasm. The catalysed reaction is octanoyl-[ACP] + L-lysyl-[protein] = N(6)-octanoyl-L-lysyl-[protein] + holo-[ACP] + H(+). It functions in the pathway protein modification; protein lipoylation via endogenous pathway; protein N(6)-(lipoyl)lysine from octanoyl-[acyl-carrier-protein]: step 1/2. Catalyzes the transfer of endogenously produced octanoic acid from octanoyl-acyl-carrier-protein onto the lipoyl domains of lipoate-dependent enzymes. Lipoyl-ACP can also act as a substrate although octanoyl-ACP is likely to be the physiological substrate. This chain is Octanoyltransferase, found in Alcanivorax borkumensis (strain ATCC 700651 / DSM 11573 / NCIMB 13689 / SK2).